We begin with the raw amino-acid sequence, 163 residues long: General stress protein 16O (163 aa).

Basic and acidic residues predominate over residues 19-30; that stretch reads QKELSGEKKETE. Disordered regions lie at residues 19–55 and 115–163; these read QKEL…TLVT and ADVE…QDSK. The dksA C4-type; degenerate zinc-finger motif lies at 89-123; that stretch reads CEKTGQEIPYERLEAVPYARMTVEAQADVEDDLET. Basic and acidic residues predominate over residues 127–146; sequence SYEREFHEQVKDLSNKETID.

The chain is General stress protein 16O (yocK) from Bacillus subtilis (strain 168).